The following is a 205-amino-acid chain: Large ribosomal subunit protein uL3 (205 aa).

The disordered stretch occupies residues 126–150; that stretch reads GGPKTHGQSDRHRAPGSIGSTTTPG.

This sequence belongs to the universal ribosomal protein uL3 family. As to quaternary structure, part of the 50S ribosomal subunit. Forms a cluster with proteins L14 and L19.

Functionally, one of the primary rRNA binding proteins, it binds directly near the 3'-end of the 23S rRNA, where it nucleates assembly of the 50S subunit. This Dehalococcoides mccartyi (strain ATCC BAA-2100 / JCM 16839 / KCTC 5957 / BAV1) protein is Large ribosomal subunit protein uL3.